The chain runs to 253 residues: Chemotaxis protein PomA (253 aa).

4 consecutive transmembrane segments (helical) span residues 6–26 (LLGL…GGSI), 28–48 (MFVD…VVLM), 146–166 (FGDV…VAML), and 180–200 (AVAL…FFPI). At 201–253 (ADKLSLRRDQETLNRRLIMDGVLAIQDGQNPRVIDSYLKNYLNEGKRALEIDE) the chain is on the cytoplasmic side.

This sequence belongs to the MotA family. In terms of assembly, each stator complex is composed of 4 PomA and 2 PomB subunits. 2 A subunits and 1 B subunit are thought to form a single ion channel, so that each stator complex contains two channels.

Its subcellular location is the cell inner membrane. In terms of biological role, pomA and PomB comprise the stator element of the flagellar motor complex. Required for rotation of the flagellar motor. Probable transmembrane proton channel. The polypeptide is Chemotaxis protein PomA (pomA) (Vibrio alginolyticus).